The primary structure comprises 106 residues: Large ribosomal subunit protein uL24 (106 aa).

It belongs to the universal ribosomal protein uL24 family. Part of the 50S ribosomal subunit.

Functionally, one of two assembly initiator proteins, it binds directly to the 5'-end of the 23S rRNA, where it nucleates assembly of the 50S subunit. Its function is as follows. One of the proteins that surrounds the polypeptide exit tunnel on the outside of the subunit. The polypeptide is Large ribosomal subunit protein uL24 (Acidithiobacillus ferrooxidans (strain ATCC 53993 / BNL-5-31) (Leptospirillum ferrooxidans (ATCC 53993))).